We begin with the raw amino-acid sequence, 69 residues long: UPF0150 protein AF_1072 (69 aa).

The protein belongs to the UPF0150 family.

The polypeptide is UPF0150 protein AF_1072 (Archaeoglobus fulgidus (strain ATCC 49558 / DSM 4304 / JCM 9628 / NBRC 100126 / VC-16)).